We begin with the raw amino-acid sequence, 377 residues long: Tryptophan 2,3-dioxygenase (377 aa).

Substrate is bound by residues 57-61 (FIITH) and Arg128. His313 contacts heme. Substrate is bound at residue Thr328.

This sequence belongs to the tryptophan 2,3-dioxygenase family. As to quaternary structure, homotetramer. Dimer of dimers. Requires heme as cofactor.

It carries out the reaction L-tryptophan + O2 = N-formyl-L-kynurenine. It functions in the pathway amino-acid degradation; L-tryptophan degradation via kynurenine pathway; L-kynurenine from L-tryptophan: step 1/2. It participates in pigment biosynthesis; ommochrome biosynthesis. Functionally, heme-dependent dioxygenase that catalyzes the oxidative cleavage of the L-tryptophan (L-Trp) pyrrole ring and converts L-tryptophan to N-formyl-L-kynurenine. Catalyzes the oxidative cleavage of the indole moiety. The polypeptide is Tryptophan 2,3-dioxygenase (Drosophila grimshawi (Hawaiian fruit fly)).